The sequence spans 309 residues: Dehydrogenase/reductase SDR family member 7B (309 aa).

At 1-4 (MDLT) the chain is on the cytoplasmic side. The chain crosses the membrane as a helical; Signal-anchor for type II membrane protein span at residues 5-25 (TWAIFPLLLGSIGVYSLYKLL). Topologically, residues 26-272 (QRLRSGAYLQ…AVGERRKELL (247 aa)) are lumenal. NAD(+) contacts are provided by serine 46 and leucine 48. A substrate-binding site is contributed by serine 178. Residues tyrosine 191, lysine 195, and threonine 226 each coordinate NAD(+). Tyrosine 191 functions as the Proton acceptor in the catalytic mechanism.

The protein belongs to the short-chain dehydrogenases/reductases (SDR) family.

Its subcellular location is the endoplasmic reticulum membrane. Functionally, putative oxidoreductase. The sequence is that of Dehydrogenase/reductase SDR family member 7B (dhrs7b) from Xenopus tropicalis (Western clawed frog).